We begin with the raw amino-acid sequence, 309 residues long: Tagatose-6-phosphate kinase (309 aa).

Belongs to the carbohydrate kinase PfkB family. LacC subfamily.

The enzyme catalyses D-tagatofuranose 6-phosphate + ATP = D-tagatofuranose 1,6-bisphosphate + ADP + H(+). It functions in the pathway carbohydrate metabolism; D-tagatose 6-phosphate degradation; D-glyceraldehyde 3-phosphate and glycerone phosphate from D-tagatose 6-phosphate: step 1/2. This Streptococcus sanguinis (strain SK36) protein is Tagatose-6-phosphate kinase.